Here is a 214-residue protein sequence, read N- to C-terminus: EEF1A lysine methyltransferase 1 (214 aa).

Ser2 is subject to N-acetylserine. A Phosphoserine modification is found at Ser2.

It belongs to the class I-like SAM-binding methyltransferase superfamily. EFM5 family.

The protein resides in the cytoplasm. The catalysed reaction is L-lysyl-[protein] + 3 S-adenosyl-L-methionine = N(6),N(6),N(6)-trimethyl-L-lysyl-[protein] + 3 S-adenosyl-L-homocysteine + 3 H(+). In terms of biological role, protein-lysine methyltransferase that selectively catalyzes the trimethylation of EEF1A at 'Lys-79'. This is EEF1A lysine methyltransferase 1 from Mus musculus (Mouse).